The following is a 604-amino-acid chain: Sulfite reductase [NADPH] flavoprotein alpha-component (604 aa).

The Flavodoxin-like domain occupies 65-203 (VTILYGSQTG…AAGQWHADVL (139 aa)). FMN contacts are provided by residues 71–76 (SQTGNG), 118–121 (STHG), and 154–163 (LGDSSYEFFC). Residues 236–453 (QNPYSAEVLV…VEPNKHFRLP (218 aa)) form the FAD-binding FR-type domain. FAD is bound by residues Thr324, Leu358, 392-395 (RLYS), 410-412 (TVA), and 425-428 (GGAS). Residues 524 to 525 (SR), 530 to 534 (KIYVQ), and Asp566 contribute to the NADP(+) site. Tyr604 provides a ligand contact to FAD.

Belongs to the NADPH-dependent sulphite reductase flavoprotein subunit CysJ family. The protein in the N-terminal section; belongs to the flavodoxin family. It in the C-terminal section; belongs to the flavoprotein pyridine nucleotide cytochrome reductase family. As to quaternary structure, alpha(8)-beta(8). The alpha component is a flavoprotein, the beta component is a hemoprotein. It depends on FAD as a cofactor. FMN is required as a cofactor.

The catalysed reaction is hydrogen sulfide + 3 NADP(+) + 3 H2O = sulfite + 3 NADPH + 4 H(+). Its pathway is sulfur metabolism; hydrogen sulfide biosynthesis; hydrogen sulfide from sulfite (NADPH route): step 1/1. Component of the sulfite reductase complex that catalyzes the 6-electron reduction of sulfite to sulfide. This is one of several activities required for the biosynthesis of L-cysteine from sulfate. The flavoprotein component catalyzes the electron flow from NADPH -&gt; FAD -&gt; FMN to the hemoprotein component. The sequence is that of Sulfite reductase [NADPH] flavoprotein alpha-component from Shewanella sp. (strain MR-4).